A 524-amino-acid chain; its full sequence is Cytokinin dehydrogenase 7 (524 aa).

In terms of domain architecture, FAD-binding PCMH-type spans 58 to 238; the sequence is NCVKPLAVVR…TRARVLLQPA (181 aa). FAD is bound by residues alanine 91, glycine 93, asparagine 94, and glycine 95. Histidine 96 carries the post-translational modification Pros-8alpha-FAD histidine. The FAD site is built by serine 97, glutamine 101, aspartate 162, threonine 167, serine 173, valine 177, isoleucine 228, tyrosine 479, serine 514, and glutamine 517.

The protein belongs to the oxygen-dependent FAD-linked oxidoreductase family. FAD is required as a cofactor. Expressed in the vasculature of roots, hypocotyls, cotyledons and leaves of young seedlings. In flowers, expressed in the transmitting tissue of the gynoecium prior to pollination. Expressed in the mature embryo sac with maximum activity in the egg cell and the synergids.

The protein resides in the cytoplasm. The protein localises to the cytosol. The catalysed reaction is N(6)-dimethylallyladenine + A + H2O = 3-methyl-2-butenal + adenine + AH2. Its function is as follows. Catalyzes the oxidation of cytokinins, a family of N(6)-substituted adenine derivatives that are plant hormones, where the substituent is an isopentenyl group. Catalyzes in vitro the oxidation of various types of cytokinin nucleotides that are known as direct products of cytokinin biosynthesis. The polypeptide is Cytokinin dehydrogenase 7 (CKX7) (Arabidopsis thaliana (Mouse-ear cress)).